A 440-amino-acid polypeptide reads, in one-letter code: Protein translocase subunit SecY (440 aa).

Helical transmembrane passes span 17–37 (IFFT…PSPG), 74–94 (IFAI…LLTV), 116–135 (YTRY…IVAL), 155–175 (FFDL…VMWM), 178–198 (LITE…GIAT), 213–233 (GVVF…VVFV), 270–290 (VIPV…TQIV), 316–336 (WQYI…YVSV), 374–394 (LLFV…IMLD), and 403–423 (GATP…LTTV).

It belongs to the SecY/SEC61-alpha family. As to quaternary structure, component of the Sec protein translocase complex. Heterotrimer consisting of SecY, SecE and SecG subunits. The heterotrimers can form oligomers, although 1 heterotrimer is thought to be able to translocate proteins. Interacts with the ribosome. Interacts with SecDF, and other proteins may be involved. Interacts with SecA.

The protein resides in the cell membrane. Functionally, the central subunit of the protein translocation channel SecYEG. Consists of two halves formed by TMs 1-5 and 6-10. These two domains form a lateral gate at the front which open onto the bilayer between TMs 2 and 7, and are clamped together by SecE at the back. The channel is closed by both a pore ring composed of hydrophobic SecY resides and a short helix (helix 2A) on the extracellular side of the membrane which forms a plug. The plug probably moves laterally to allow the channel to open. The ring and the pore may move independently. The sequence is that of Protein translocase subunit SecY from Corynebacterium glutamicum (strain ATCC 13032 / DSM 20300 / JCM 1318 / BCRC 11384 / CCUG 27702 / LMG 3730 / NBRC 12168 / NCIMB 10025 / NRRL B-2784 / 534).